We begin with the raw amino-acid sequence, 573 residues long: Proton-coupled zinc antiporter SLC30A9, mitochondrial (573 aa).

The tract at residues 66–108 is disordered; that stretch reads NCSTSGSGKDGSPTRPEEPKTTEKAQAAQPAAKGAGSKPQGLT. A compositionally biased stretch (low complexity) spans 90–104; the sequence is AQAAQPAAKGAGSKP. 5 helical membrane-spanning segments follow: residues 244–264, 319–339, 347–367, 397–417, and 429–449; these read VVMVAICINGLNFFFKLLAWV, GVGIFMMGAGLSWYHGIMGLL, LLWAYCILAGSLVSEGATLLV, VVLLEDAAAVLGVVLAAGCMG, and SLGSLGVGTLLGTVSAFLIYT. The LXXLL motif signature appears at 467-471; that stretch reads LTEFL.

The protein belongs to the cation diffusion facilitator (CDF) transporter (TC 2.A.4) family. SLC30A subfamily.

The protein localises to the mitochondrion membrane. It is found in the nucleus. Its subcellular location is the endoplasmic reticulum. The enzyme catalyses Zn(2+)(in) + 2 H(+)(out) = Zn(2+)(out) + 2 H(+)(in). Its function is as follows. Mitochondrial proton-coupled zinc ion antiporter mediating the export of zinc from the mitochondria and involved in zinc homeostasis, zinc mobilization as well as mitochondrial morphology and health. In nucleus, may function as a secondary coactivator for nuclear receptors. The chain is Proton-coupled zinc antiporter SLC30A9, mitochondrial (slc30a9) from Danio rerio (Zebrafish).